A 257-amino-acid polypeptide reads, in one-letter code: Undecaprenyl-diphosphatase (257 aa).

Transmembrane regions (helical) follow at residues Tyr42–Leu62, Ile76–Ile96, Pro103–Phe123, Cys136–Ala156, Ile172–Trp192, Gln209–Ile229, and Trp237–Met257.

This sequence belongs to the UppP family.

It localises to the cell inner membrane. It carries out the reaction di-trans,octa-cis-undecaprenyl diphosphate + H2O = di-trans,octa-cis-undecaprenyl phosphate + phosphate + H(+). Catalyzes the dephosphorylation of undecaprenyl diphosphate (UPP). Confers resistance to bacitracin. This Protochlamydia amoebophila (strain UWE25) protein is Undecaprenyl-diphosphatase.